We begin with the raw amino-acid sequence, 529 residues long: Peptide chain release factor 3 (529 aa).

Positions alanine 11–glutamine 279 constitute a tr-type G domain. Residues serine 20–threonine 27, aspartate 88–histidine 92, and asparagine 142–aspartate 145 each bind GTP.

Belongs to the TRAFAC class translation factor GTPase superfamily. Classic translation factor GTPase family. PrfC subfamily.

The protein resides in the cytoplasm. In terms of biological role, increases the formation of ribosomal termination complexes and stimulates activities of RF-1 and RF-2. It binds guanine nucleotides and has strong preference for UGA stop codons. It may interact directly with the ribosome. The stimulation of RF-1 and RF-2 is significantly reduced by GTP and GDP, but not by GMP. This is Peptide chain release factor 3 from Idiomarina loihiensis (strain ATCC BAA-735 / DSM 15497 / L2-TR).